We begin with the raw amino-acid sequence, 111 residues long: N-alpha-acetyltransferase 38-B, NatC auxiliary subunit (111 aa).

Positions 28–106 (TARHKLESLL…IVSIQVELET (79 aa)) constitute a Sm domain.

Belongs to the snRNP Sm proteins family. Component of the N-terminal acetyltransferase C (NatC) complex, which is composed of naa35, naa38 and naa30.

It is found in the cytoplasm. Auxillary component of the N-terminal acetyltransferase C (NatC) complex which catalyzes acetylation of N-terminal methionine residues. This chain is N-alpha-acetyltransferase 38-B, NatC auxiliary subunit (naa38-b), found in Xenopus laevis (African clawed frog).